We begin with the raw amino-acid sequence, 541 residues long: CTP synthase (541 aa).

Residues methionine 1–leucine 265 are amidoligase domain. Serine 13 lines the CTP pocket. Serine 13 contacts UTP. Serine 14–leucine 19 is a binding site for ATP. L-glutamine is bound at residue tyrosine 54. Residue aspartate 71 participates in ATP binding. Residues aspartate 71 and glutamate 139 each coordinate Mg(2+). Residues aspartate 146–glutamate 148, lysine 186–glutamine 191, and lysine 222 contribute to the CTP site. UTP contacts are provided by residues lysine 186–glutamine 191 and lysine 222. Residues threonine 290 to leucine 540 form the Glutamine amidotransferase type-1 domain. Glycine 352 provides a ligand contact to L-glutamine. Cysteine 379 (nucleophile; for glutamine hydrolysis) is an active-site residue. L-glutamine-binding positions include phenylalanine 380 to glutamine 383, glutamate 403, and arginine 468. Residues histidine 513 and glutamate 515 contribute to the active site.

The protein belongs to the CTP synthase family. As to quaternary structure, homotetramer.

The catalysed reaction is UTP + L-glutamine + ATP + H2O = CTP + L-glutamate + ADP + phosphate + 2 H(+). The enzyme catalyses L-glutamine + H2O = L-glutamate + NH4(+). It carries out the reaction UTP + NH4(+) + ATP = CTP + ADP + phosphate + 2 H(+). Its pathway is pyrimidine metabolism; CTP biosynthesis via de novo pathway; CTP from UDP: step 2/2. Its activity is regulated as follows. Allosterically activated by GTP, when glutamine is the substrate; GTP has no effect on the reaction when ammonia is the substrate. The allosteric effector GTP functions by stabilizing the protein conformation that binds the tetrahedral intermediate(s) formed during glutamine hydrolysis. Inhibited by the product CTP, via allosteric rather than competitive inhibition. Its function is as follows. Catalyzes the ATP-dependent amination of UTP to CTP with either L-glutamine or ammonia as the source of nitrogen. Regulates intracellular CTP levels through interactions with the four ribonucleotide triphosphates. In Paramagnetospirillum magneticum (strain ATCC 700264 / AMB-1) (Magnetospirillum magneticum), this protein is CTP synthase.